The following is a 350-amino-acid chain: Twinfilin-1 (350 aa).

Ser2 is subject to N-acetylserine. The ADF-H 1 domain maps to 2-139 (SHQTGIQASE…SLHGYKKYLL (138 aa)). Phosphoserine occurs at positions 143 and 277. The ADF-H 2 domain occupies 175 to 313 (LQGVAFPISR…TADFLYEEVH (139 aa)). Tyr309 carries the post-translational modification Phosphotyrosine. A disordered region spans residues 316–350 (QHAHKQSFAKPKGPAGKRGIRRLIRGPAETEATTD). Phosphothreonine is present on Thr349.

The protein belongs to the actin-binding proteins ADF family. Twinfilin subfamily. In terms of assembly, interacts with G-actin; ADP-actin form and capping protein (CP). May also be able to interact with TWF2 and phosphoinositides, PI(4,5)P2. When bound to PI(4,5)P2, it is down-regulated. Interacts with ACTG1. In terms of processing, phosphorylated on serine and threonine residues. As to expression, expressed at high levels in the colon, testis, ovary, prostate and lung. Expressed at lower levels in the brain, bladder and heart. Not detected in liver.

The protein resides in the cytoplasm. It localises to the cytoskeleton. Functionally, actin-binding protein involved in motile and morphological processes. Inhibits actin polymerization, likely by sequestering G-actin. By capping the barbed ends of filaments, it also regulates motility. Seems to play an important role in clathrin-mediated endocytosis and distribution of endocytic organelles. The polypeptide is Twinfilin-1 (TWF1) (Homo sapiens (Human)).